The sequence spans 716 residues: 1,4-alpha-glucan branching enzyme GlgB (716 aa).

Asp-398 acts as the Nucleophile in catalysis. Residue Glu-451 is the Proton donor of the active site.

It belongs to the glycosyl hydrolase 13 family. GlgB subfamily. As to quaternary structure, monomer.

The catalysed reaction is Transfers a segment of a (1-&gt;4)-alpha-D-glucan chain to a primary hydroxy group in a similar glucan chain.. It participates in glycan biosynthesis; glycogen biosynthesis. Catalyzes the formation of the alpha-1,6-glucosidic linkages in glycogen by scission of a 1,4-alpha-linked oligosaccharide from growing alpha-1,4-glucan chains and the subsequent attachment of the oligosaccharide to the alpha-1,6 position. The chain is 1,4-alpha-glucan branching enzyme GlgB from Nitrobacter winogradskyi (strain ATCC 25391 / DSM 10237 / CIP 104748 / NCIMB 11846 / Nb-255).